Reading from the N-terminus, the 239-residue chain is Probable transcriptional regulatory protein BCQ_0605 (239 aa).

The protein belongs to the TACO1 family. YeeN subfamily.

It is found in the cytoplasm. This Bacillus cereus (strain Q1) protein is Probable transcriptional regulatory protein BCQ_0605.